The chain runs to 232 residues: Phosphoribosylformylglycinamidine synthase subunit PurQ (232 aa).

In terms of domain architecture, Glutamine amidotransferase type-1 spans 2–232; sequence KIAILQFGGT…SMVDYITENF (231 aa). Cys86 (nucleophile) is an active-site residue. Residues His203 and Glu205 contribute to the active site.

As to quaternary structure, part of the FGAM synthase complex composed of 1 PurL, 1 PurQ and 2 PurS subunits.

It is found in the cytoplasm. It carries out the reaction N(2)-formyl-N(1)-(5-phospho-beta-D-ribosyl)glycinamide + L-glutamine + ATP + H2O = 2-formamido-N(1)-(5-O-phospho-beta-D-ribosyl)acetamidine + L-glutamate + ADP + phosphate + H(+). It catalyses the reaction L-glutamine + H2O = L-glutamate + NH4(+). It functions in the pathway purine metabolism; IMP biosynthesis via de novo pathway; 5-amino-1-(5-phospho-D-ribosyl)imidazole from N(2)-formyl-N(1)-(5-phospho-D-ribosyl)glycinamide: step 1/2. Its function is as follows. Part of the phosphoribosylformylglycinamidine synthase complex involved in the purines biosynthetic pathway. Catalyzes the ATP-dependent conversion of formylglycinamide ribonucleotide (FGAR) and glutamine to yield formylglycinamidine ribonucleotide (FGAM) and glutamate. The FGAM synthase complex is composed of three subunits. PurQ produces an ammonia molecule by converting glutamine to glutamate. PurL transfers the ammonia molecule to FGAR to form FGAM in an ATP-dependent manner. PurS interacts with PurQ and PurL and is thought to assist in the transfer of the ammonia molecule from PurQ to PurL. In Methanosarcina barkeri (strain Fusaro / DSM 804), this protein is Phosphoribosylformylglycinamidine synthase subunit PurQ.